Here is a 267-residue protein sequence, read N- to C-terminus: Large ribosomal subunit protein bL9m (267 aa).

The N-terminal 52 residues, M1–G52, are a transit peptide targeting the mitochondrion.

Belongs to the bacterial ribosomal protein bL9 family. As to quaternary structure, component of the mitochondrial ribosome large subunit (39S) which comprises a 16S rRNA and about 50 distinct proteins.

It localises to the mitochondrion. The polypeptide is Large ribosomal subunit protein bL9m (MRPL9) (Papio anubis (Olive baboon)).